Reading from the N-terminus, the 339-residue chain is Fructose-1,6-bisphosphatase isozyme 2 (339 aa).

Residues 3–10 are important for interaction with ALDOA; that stretch reads DRSPFETD. Residues valine 18 and 28–32 each bind AMP; that span reads TGELT. Mg(2+)-binding residues include aspartate 69 and glutamate 98. 113-114 contributes to the AMP binding site; the sequence is KY. Residues aspartate 119, leucine 121, and aspartate 122 each contribute to the Mg(2+) site. Residue aspartate 122 coordinates substrate. Position 141 (arginine 141) interacts with AMP. A Nuclear localization signal motif is present at residues 204–208; it reads KKKGK. 213-216 provides a ligand contact to substrate; that stretch reads NEGY. 2 positions are modified to phosphotyrosine: tyrosine 216 and tyrosine 219. Substrate contacts are provided by residues 245–249, tyrosine 265, and lysine 275; that span reads YVGSM. A Mg(2+)-binding site is contributed by glutamate 281.

It belongs to the FBPase class 1 family. In terms of assembly, homotetramer. Interacts with ALDOA; the interaction blocks inhibition by physiological concentrations of AMP and reduces inhibition by Ca(2+). Interacts with alpha-actinin and F-actin. Requires Mg(2+) as cofactor.

It is found in the cell junction. It localises to the cytoplasm. The protein localises to the nucleus. Its subcellular location is the myofibril. The protein resides in the sarcomere. It is found in the z line. The catalysed reaction is beta-D-fructose 1,6-bisphosphate + H2O = beta-D-fructose 6-phosphate + phosphate. It functions in the pathway carbohydrate biosynthesis; gluconeogenesis. Subject to complex allosteric regulation. The enzyme can assume an active R-state, or an inactive T-state. Intermediate conformations may exist. AMP acts as an allosteric inhibitor. Fructose 2,6-bisphosphate acts as a competitive inhibitor. Strongly inhibited by Ca(2+). Its function is as follows. Catalyzes the hydrolysis of fructose 1,6-bisphosphate to fructose 6-phosphate in the presence of divalent cations and probably participates in glycogen synthesis from carbohydrate precursors, such as lactate. This Oryctolagus cuniculus (Rabbit) protein is Fructose-1,6-bisphosphatase isozyme 2 (FBP2).